A 155-amino-acid chain; its full sequence is 3-hydroxyacyl-[acyl-carrier-protein] dehydratase FabZ (155 aa).

Histidine 58 is a catalytic residue.

This sequence belongs to the thioester dehydratase family. FabZ subfamily.

It localises to the cytoplasm. The catalysed reaction is a (3R)-hydroxyacyl-[ACP] = a (2E)-enoyl-[ACP] + H2O. Its function is as follows. Involved in unsaturated fatty acids biosynthesis. Catalyzes the dehydration of short chain beta-hydroxyacyl-ACPs and long chain saturated and unsaturated beta-hydroxyacyl-ACPs. The chain is 3-hydroxyacyl-[acyl-carrier-protein] dehydratase FabZ from Alkalilimnicola ehrlichii (strain ATCC BAA-1101 / DSM 17681 / MLHE-1).